Reading from the N-terminus, the 267-residue chain is Hydroxyethylthiazole kinase (267 aa).

Met51 contributes to the substrate binding site. ATP contacts are provided by Arg127 and Ser173. Ala200 contributes to the substrate binding site.

The protein belongs to the Thz kinase family. Mg(2+) serves as cofactor.

The catalysed reaction is 5-(2-hydroxyethyl)-4-methylthiazole + ATP = 4-methyl-5-(2-phosphooxyethyl)-thiazole + ADP + H(+). The protein operates within cofactor biosynthesis; thiamine diphosphate biosynthesis; 4-methyl-5-(2-phosphoethyl)-thiazole from 5-(2-hydroxyethyl)-4-methylthiazole: step 1/1. In terms of biological role, catalyzes the phosphorylation of the hydroxyl group of 4-methyl-5-beta-hydroxyethylthiazole (THZ). This Psychromonas ingrahamii (strain DSM 17664 / CCUG 51855 / 37) protein is Hydroxyethylthiazole kinase.